Reading from the N-terminus, the 312-residue chain is Ribosomal protein L11 methyltransferase (312 aa).

The S-adenosyl-L-methionine site is built by Thr160, Gly181, Asp203, and Asn246.

Belongs to the methyltransferase superfamily. PrmA family.

The protein resides in the cytoplasm. The enzyme catalyses L-lysyl-[protein] + 3 S-adenosyl-L-methionine = N(6),N(6),N(6)-trimethyl-L-lysyl-[protein] + 3 S-adenosyl-L-homocysteine + 3 H(+). Functionally, methylates ribosomal protein L11. The sequence is that of Ribosomal protein L11 methyltransferase from Staphylococcus aureus (strain JH1).